Reading from the N-terminus, the 374-residue chain is RNA ligase 1 (374 aa).

3 residues coordinate ATP: tyrosine 37, arginine 54, and lysine 75. Lysine 99 functions as the N6-AMP-lysine intermediate in the catalytic mechanism. The ATP site is built by glutamate 159, lysine 240, and lysine 242. Aspartate 272 lines the Mg(2+) pocket.

The protein belongs to the Tequatrovirus RNA ligase 1 family. Requires Mg(2+) as cofactor.

It carries out the reaction ATP + (ribonucleotide)n-3'-hydroxyl + 5'-phospho-(ribonucleotide)m = (ribonucleotide)n+m + AMP + diphosphate.. In terms of biological role, involved in countering a host defense mechanism which, following viral infection, activates the host anticodon nuclease and shuts off viral translation. Repairs 5'-PO4 and 3'-OH groups in the cleaved host tRNA. The nick ligation reaction entails three nucleotidyl transfer steps. In the first step, the RNA ligase reacts with ATP in the absence of nucleic acid to form a covalent ligase-AMP intermediate and release pyrophosphate. In step 2, the ligase-AMP binds to the nicked duplex nucleic acid and transfers the adenylate to the 5'-PO4 terminus to form an adenylylated nicked intermediate. In step 3, the RNA ligase directs the attack of the nick 3'-OH on the 5'-phosphoanhydride linkage, resulting in a repaired 3'-5' phosphodiester and release of AMP. The protein is RNA ligase 1 (63) of Enterobacteria phage T4 (Bacteriophage T4).